A 172-amino-acid chain; its full sequence is RNA silencing suppressor p19 (172 aa).

The interval 153 to 172 is disordered; it reads EGNVSGGSPEGIEAFEKESE.

The protein belongs to the tombusvirus protein p19 family. As to quaternary structure, homodimer.

Viral suppressor of RNA silencing which binds specifically to silencing RNAs (siRNAs). Acts as a molecular caliper to specifically select siRNAs based on the length of the duplex region of the RNA. This chain is RNA silencing suppressor p19, found in Pelargonium zonale (PeNSV).